Here is a 1011-residue protein sequence, read N- to C-terminus: Beta-galactosidase A (1011 aa).

An N-terminal signal peptide occupies residues M1–A19. Substrate-binding positions include Y96, N140–E142, and N199. Residue E200 is the Proton donor of the active site. 2 cysteine pairs are disulfide-bonded: C205–C206 and C267–C316. The active-site Nucleophile is the E299. Y365 is a substrate binding site. Residues N374, N456, N625, N707, N763, N780, and N917 are each glycosylated (N-linked (GlcNAc...) asparagine).

The protein belongs to the glycosyl hydrolase 35 family. As to quaternary structure, monomer.

It is found in the secreted. It catalyses the reaction Hydrolysis of terminal non-reducing beta-D-galactose residues in beta-D-galactosides.. Cleaves beta-linked terminal galactosyl residues from gangliosides, glycoproteins, and glycosaminoglycans. Has high in vitro transglycosylation activity with p-nitrophenyl-beta-D-galactopyranoside, methyl-beta-D-galactopyranoside or lactose as a donor and galactose as an acceptor. This is Beta-galactosidase A (lacA) from Penicillium sp.